We begin with the raw amino-acid sequence, 861 residues long: DNA topoisomerase 1 (861 aa).

A Toprim domain is found at 3 to 141; it reads KSLVIVESPA…KFSRVVFNEI (139 aa). Positions 9 and 110 each coordinate Mg(2+). The region spanning 157 to 572 is the Topo IA-type catalytic domain; it reads NMNRVHAQQA…DFFKKFSEQL (416 aa). The interval 191–196 is interaction with DNA; the sequence is SAGRVQ. Tyrosine 318 (O-(5'-phospho-DNA)-tyrosine intermediate) is an active-site residue. 3 C4-type zinc fingers span residues 596-628, 658-685, and 707-732; these read CPIC…KKRC, CDIC…NPSC, and CEKC…NKIC.

Belongs to the type IA topoisomerase family. As to quaternary structure, monomer. The cofactor is Mg(2+).

The enzyme catalyses ATP-independent breakage of single-stranded DNA, followed by passage and rejoining.. Releases the supercoiling and torsional tension of DNA, which is introduced during the DNA replication and transcription, by transiently cleaving and rejoining one strand of the DNA duplex. Introduces a single-strand break via transesterification at a target site in duplex DNA. The scissile phosphodiester is attacked by the catalytic tyrosine of the enzyme, resulting in the formation of a DNA-(5'-phosphotyrosyl)-enzyme intermediate and the expulsion of a 3'-OH DNA strand. The free DNA strand then undergoes passage around the unbroken strand, thus removing DNA supercoils. Finally, in the religation step, the DNA 3'-OH attacks the covalent intermediate to expel the active-site tyrosine and restore the DNA phosphodiester backbone. The chain is DNA topoisomerase 1 from Buchnera aphidicola subsp. Acyrthosiphon pisum (strain APS) (Acyrthosiphon pisum symbiotic bacterium).